We begin with the raw amino-acid sequence, 226 residues long: Phosphoglycolate phosphatase (226 aa).

Asp9 serves as the catalytic Nucleophile. Mg(2+) is bound by residues Asp9 and Asp11. Residue Lys150 coordinates substrate. The Mg(2+) site is built by Asp173 and Asp177.

It belongs to the archaeal SPP-like hydrolase family. It depends on Mg(2+) as a cofactor.

It catalyses the reaction 2-phosphoglycolate + H2O = glycolate + phosphate. In terms of biological role, catalyzes the dephosphorylation of 2-phosphoglycolate. The protein is Phosphoglycolate phosphatase of Methanosarcina acetivorans (strain ATCC 35395 / DSM 2834 / JCM 12185 / C2A).